Reading from the N-terminus, the 354-residue chain is Histidinol-phosphate aminotransferase (354 aa).

Lysine 210 carries the N6-(pyridoxal phosphate)lysine modification.

Belongs to the class-II pyridoxal-phosphate-dependent aminotransferase family. Histidinol-phosphate aminotransferase subfamily. As to quaternary structure, homodimer. It depends on pyridoxal 5'-phosphate as a cofactor.

It catalyses the reaction L-histidinol phosphate + 2-oxoglutarate = 3-(imidazol-4-yl)-2-oxopropyl phosphate + L-glutamate. It participates in amino-acid biosynthesis; L-histidine biosynthesis; L-histidine from 5-phospho-alpha-D-ribose 1-diphosphate: step 7/9. The protein is Histidinol-phosphate aminotransferase of Clostridium botulinum (strain ATCC 19397 / Type A).